We begin with the raw amino-acid sequence, 257 residues long: MASKIGSRRWMLQLIMQLGSVLLTRCPFWGCFSQLMLYAERAEARRKPDIPVPYLYFDMGAAVLCASFMSFGVKRRWFALGAALQLAISTYTAYIGGYVHYGDWLKVRMYSRTVAIIGGFLVLASGAGELYRRKPRSRSLQSTGQVFLGIYLICVAYSLQHSKEDRLAYLNHLPGGELMVQLFFVLYGVLALAFLSGYYVTLAAQILAVLLPPVMLLIDGNVSYWHNTRRVEFWNQMKLLGESVGIFGAAVILATDG.

Helical transmembrane passes span 24–40 (TRCP…LYAE), 52–72 (VPYL…MSFG), 77–97 (WFAL…YIGG), 110–130 (YSRT…AGEL), 139–159 (SLQS…AYSL), 182–202 (LFFV…YVTL), 206–226 (ILAV…SYWH), and 233–253 (FWNQ…AVIL).

The protein localises to the membrane. In terms of biological role, may activate NF-kappa-B signaling pathways. The protein is Transmembrane protein 101 (Tmem101) of Mus musculus (Mouse).